The sequence spans 147 residues: Myoglobin (147 aa).

The Globin domain maps to 2 to 141 (ADFDMVLKCW…IIADMEADYK (140 aa)). His60 contacts nitrite. His60 lines the O2 pocket. His89 provides a ligand contact to heme b.

The protein belongs to the globin family. As to quaternary structure, monomeric.

Its subcellular location is the cytoplasm. It is found in the sarcoplasm. It catalyses the reaction Fe(III)-heme b-[protein] + nitric oxide + H2O = Fe(II)-heme b-[protein] + nitrite + 2 H(+). The enzyme catalyses H2O2 + AH2 = A + 2 H2O. In terms of biological role, monomeric heme protein which primary function is to store oxygen and facilitate its diffusion within muscle tissues. Reversibly binds oxygen through a pentacoordinated heme iron and enables its timely and efficient release as needed during periods of heightened demand. Depending on the oxidative conditions of tissues and cells, and in addition to its ability to bind oxygen, it also has a nitrite reductase activity whereby it regulates the production of bioactive nitric oxide. Under stress conditions, like hypoxia and anoxia, it also protects cells against reactive oxygen species thanks to its pseudoperoxidase activity. In Gobionotothen gibberifrons (Humped rockcod), this protein is Myoglobin (mb).